The sequence spans 489 residues: Pluviatolide synthase (489 aa).

Residues Ser-6–Phe-26 form a helical membrane-spanning segment. Residue Cys-432 participates in heme binding.

This sequence belongs to the cytochrome P450 family. It depends on heme as a cofactor. As to expression, expressed in leaves, rhizomes and stems.

It is found in the membrane. The enzyme catalyses (-)-matairesinol + reduced [NADPH--hemoprotein reductase] + O2 = (-)-pluviatolide + oxidized [NADPH--hemoprotein reductase] + 2 H2O + H(+). It participates in aromatic compound metabolism; phenylpropanoid biosynthesis. Its function is as follows. Cytochrome P450 involved in the biosynthesis of etoposide, a chemotherapeutic compound of the topoisomerase inhibitor family. Catalyzes the conversion of matairesinol to pluviatolide. The sequence is that of Pluviatolide synthase from Sinopodophyllum hexandrum (Himalayan may apple).